The chain runs to 624 residues: Kelch-like ECH-associated protein 1 (624 aa).

Residues Met1–Ala27 form a disordered region. Cys38 carries the post-translational modification S-(2-succinyl)cysteine. The BTB domain occupies Cys77 to Glu149. Residue Arg135 forms an N5-[4-(S-L-cysteinyl)-5-methyl-1H-imidazol-2-yl]-L-ornithine (Arg-Cys) (interchain with C-151 in KEAP1) linkage. Residues Cys151 and Cys241 each carry the S-(2-succinyl)cysteine modification. Cys151 bears the S-(2,3-dicarboxypropyl)cysteine; alternate mark. Position 151 is an S-nitrosocysteine; alternate (Cys151). Cys151 participates in a covalent cross-link: N5-[4-(S-L-cysteinyl)-5-methyl-1H-imidazol-2-yl]-L-ornithine (Cys-Arg) (interchain with R-135 in KEAP1). A BACK domain is found at Ala184–Gln286. Cys257 and Cys273 each carry S-(2,3-dicarboxypropyl)cysteine. Cys288 and Cys319 each carry S-(2-succinyl)cysteine. Residue Cys288 is modified to S-(2,3-dicarboxypropyl)cysteine; alternate. Kelch repeat units follow at residues Leu327–Gly372, Leu373–Gly423, His424–Arg470, Leu471–Asn517, Ile519–Gly564, and Arg565–Glu611. Cys434 carries the post-translational modification S-cGMP-cysteine. Cys613 bears the S-(2-succinyl)cysteine mark.

It belongs to the KEAP1 family. As to quaternary structure, component of the BCR(KEAP1) E3 ubiquitin ligase complex, at least composed of 2 molecules of CUL3, 2 molecules of KEAP1, and RBX1. Interacts with NFE2L2/NRF2; the interaction is direct. Forms a ternary complex with NFE2L2/NRF2 and PGAM5. Interacts with (phosphorylated) SQSTM1/p62; the interaction is direct and inactivates the BCR(KEAP1) complex by sequestering it in inclusion bodies, promoting its degradation. Interacts with NFE2L1. Interacts with BPTF and PTMA. Interacts with MAP1LC3B. Interacts indirectly with ENC1. Interacts with SESN1 and SESN2. Interacts with HSP90AA1 and HSP90AB1. Interacts with PGCKA1; this interaction prevents the ubiquitination of KEAP1 by TRIM25, thus protecting KEAP1 protein from degradation. Post-translationally, non-enzymatic covalent modifications of reactive cysteines by electrophile metabolites inactivate the BCR(KEAP1) complex. Accumulation of fumarate promotes the formation of cysteine S-succination (S-(2-succinyl)cysteine), leading to inactivate the BCR(KEAP1) complex and promote NFE2L2/NRF2 nuclear accumulation and activation. Nitric oxide-dependent 8-Nitro-cGMP formation promotes cysteine guanylation (S-cGMP-cysteine), leading to NFE2L2/NRF2 nuclear accumulation and activation. Itaconate, an anti-inflammatory metabolite generated in response to lipopolysaccharide, alkylates cysteines, activating NFE2L2/NRF2. Methylglyoxal, a reactive metabolite that accumulates when the glycolytic enzyme PGK1 is inhibited, promotes formation of a methylimidazole cross-link between proximal Cys-151 and Arg-135 on another KEAP1 molecule, resulting in an inactive dimer that inactivates the BCR(KEAP1) complex. Degraded via a proteasomal-independent process during selective autophagy: interaction with phosphorylated SQSTM1/p62 sequesters KEAP1 in inclusion bodies, leading to its degradation. In terms of processing, auto-ubiquitinated by the BCR(KEAP1) complex. Quinone-induced oxidative stress, but not sulforaphane, increases its ubiquitination. Ubiquitination and subsequent degradation is most pronounced following prolonged exposure of cells to oxidative stress, particularly in glutathione-deficient cells that are highly susceptible to oxidative stress. Deubiquitinated by USP25; leading to stabilization. Ubiquitinated by TRIM25; leading to degradation upon ER stress.

Its subcellular location is the cytoplasm. It localises to the nucleus. The protein operates within protein modification; protein ubiquitination. Its activity is regulated as follows. Ubiquitin ligase activity of the BCR(KEAP1) complex is inhibited by oxidative stress and electrophile metabolites such as sulforaphane. Electrophile metabolites react with reactive cysteine residues in KEAP1 and trigger non-enzymatic covalent modifications of these cysteine residues, leading to inactivate the ubiquitin ligase activity of the BCR(KEAP1) complex. Selective autophagy also inactivates the BCR(KEAP1) complex via interaction between KEAP1 and SQSTM1/p62, which sequesters the complex in inclusion bodies and promotes its degradation. In terms of biological role, substrate-specific adapter of a BCR (BTB-CUL3-RBX1) E3 ubiquitin ligase complex that regulates the response to oxidative stress by targeting NFE2L2/NRF2 for ubiquitination. KEAP1 acts as a key sensor of oxidative and electrophilic stress: in normal conditions, the BCR(KEAP1) complex mediates ubiquitination and degradation of NFE2L2/NRF2, a transcription factor regulating expression of many cytoprotective genes. In response to oxidative stress, different electrophile metabolites trigger non-enzymatic covalent modifications of highly reactive cysteine residues in KEAP1, leading to inactivate the ubiquitin ligase activity of the BCR(KEAP1) complex, promoting NFE2L2/NRF2 nuclear accumulation and expression of phase II detoxifying enzymes. In response to selective autophagy, KEAP1 is sequestered in inclusion bodies following its interaction with SQSTM1/p62, leading to inactivation of the BCR(KEAP1) complex and activation of NFE2L2/NRF2. The BCR(KEAP1) complex also mediates ubiquitination of SQSTM1/p62, increasing SQSTM1/p62 sequestering activity and degradation. The BCR(KEAP1) complex also targets BPTF and PGAM5 for ubiquitination and degradation by the proteasome. In Sus scrofa (Pig), this protein is Kelch-like ECH-associated protein 1.